The chain runs to 150 residues: 3-hydroxyacyl-[acyl-carrier-protein] dehydratase FabZ (150 aa).

His54 is an active-site residue.

It belongs to the thioester dehydratase family. FabZ subfamily.

It localises to the cytoplasm. It carries out the reaction a (3R)-hydroxyacyl-[ACP] = a (2E)-enoyl-[ACP] + H2O. Functionally, involved in unsaturated fatty acids biosynthesis. Catalyzes the dehydration of short chain beta-hydroxyacyl-ACPs and long chain saturated and unsaturated beta-hydroxyacyl-ACPs. This Pseudoalteromonas translucida (strain TAC 125) protein is 3-hydroxyacyl-[acyl-carrier-protein] dehydratase FabZ.